Consider the following 362-residue polypeptide: Probable secreted beta-glucosidase UTH1 (362 aa).

A signal peptide spans Met1–Ala17.

This sequence belongs to the SUN family.

It localises to the mitochondrion outer membrane. Its subcellular location is the secreted. It is found in the cell wall. Its function is as follows. Involved in aging, oxidative stress response, and in the regulation of mitochondrial biogenesis. Inactivation of UTH1 increases life span, leads to higher resistance to heat stress and to hydrogen peroxide, and increases sensitivity to the superoxide radical-generating drug paraquat and to copper. Also required for the selective autophagic degradation of mitochondria (mitophagy) in response to nitrogen starvation. Involved in the remodeling of the cell wall during the various phases of yeast culture development and under various environmental conditions and plays a role in septation. Involved in cell sensitivity to boric acid. In Saccharomyces cerevisiae (strain RM11-1a) (Baker's yeast), this protein is Probable secreted beta-glucosidase UTH1 (UTH1).